The sequence spans 368 residues: Peptide chain release factor 2 (368 aa).

Gln250 carries the N5-methylglutamine modification.

It belongs to the prokaryotic/mitochondrial release factor family. Post-translationally, methylated by PrmC. Methylation increases the termination efficiency of RF2.

The protein localises to the cytoplasm. In terms of biological role, peptide chain release factor 2 directs the termination of translation in response to the peptide chain termination codons UGA and UAA. This chain is Peptide chain release factor 2, found in Rickettsia africae (strain ESF-5).